We begin with the raw amino-acid sequence, 172 residues long: Cyclin-L1 (172 aa).

The disordered stretch occupies residues 1 to 36 (MASGPHSTATAAAAASSAAPSAGGSSSGTTTTTTTT). The segment at 88–168 (ELIQAAGILL…LRGKSDQLHL (81 aa)) is cyclin-like.

This sequence belongs to the cyclin family. Cyclin L subfamily. As to quaternary structure, interacts with POLR2A via its hyperphosphorylated C-terminal domain (CTD). Interacts with CDK11A, CDK11B, CDK12 and CDK13. May form a ternary complex with CDK11B and casein kinase II (CKII). Interacts with pre-mRNA-splicing factors, including at least SRSF1, SRSF2 and SRSF7/SLU7.

It localises to the nucleus speckle. The protein resides in the nucleus. Its subcellular location is the nucleoplasm. Its function is as follows. Involved in pre-mRNA splicing. Functions in association with cyclin-dependent kinases (CDKs). May play a role in the regulation of RNA polymerase II (pol II). Inhibited by the CDK-specific inhibitor CDKN1A/p21. This Pongo abelii (Sumatran orangutan) protein is Cyclin-L1 (CCNL1).